A 433-amino-acid polypeptide reads, in one-letter code: Keratin, type I cytoskeletal 17 (433 aa).

The segment at Met1–Ser24 is disordered. A head region spans residues Met1–Gly83. Phosphoserine is present on residues Ser12 and Ser13. A Glycyl lysine isopeptide (Lys-Gly) (interchain with G-Cter in SUMO1); alternate cross-link involves residue Lys15. Residue Lys15 forms a Glycyl lysine isopeptide (Lys-Gly) (interchain with G-Cter in SUMO2); alternate linkage. A phosphoserine mark is found at Ser25, Ser32, Ser34, and Ser39. Ser44 is subject to Phosphoserine; by RPS6KA1. Residues Glu84–Tyr120 are coil 1A. One can recognise an IF rod domain in the interval Glu84–Leu395. Thr110 is modified (phosphothreonine). The linker 1 stretch occupies residues Gln121–Ile138. The segment at Glu139–Arg230 is coil 1B. Residues Gly231–Ser250 form a linker 12 region. The segment at Arg251 to Asp392 is coil 2. Residue Lys278 forms a Glycyl lysine isopeptide (Lys-Gly) (interchain with G-Cter in SUMO2) linkage. The residue at position 279 (Thr279) is a Phosphothreonine. Phosphoserine is present on Ser323. Residues Ala393–Arg433 form a tail region. Glycyl lysine isopeptide (Lys-Gly) (interchain with G-Cter in SUMO1); alternate cross-links involve residues Lys399, Lys401, and Lys420. Glycyl lysine isopeptide (Lys-Gly) (interchain with G-Cter in SUMO2); alternate cross-links involve residues Lys399, Lys401, and Lys420.

The protein belongs to the intermediate filament family. In terms of assembly, heterodimer of a type I and a type II keratin. KRT17 associates with KRT6 isomers (KRT6A or KRT6B). Interacts with TRADD and SFN. In terms of processing, phosphorylation at Ser-44 occurs in a growth- and stress-dependent fashion in skin keratinocytes, it has no effect on filament organization. Expressed strongly in outer root sheath and medulla region of hair follicle and in the early differentiating epithelial cells (trichocytes) within the hair bulb region. Weak expression in the matrix cells of hair bulb. Also present in the sweat gland within the skin, vibrissae follicle, salivary gland, tooth and thymus.

Its subcellular location is the cytoplasm. Its function is as follows. Type I keratin involved in the formation and maintenance of various skin appendages, specifically in determining shape and orientation of hair. Required for the correct growth of hair follicles, in particular for the persistence of the anagen (growth) state. Modulates the function of TNF-alpha in the specific context of hair cycling. Regulates protein synthesis and epithelial cell growth through binding to the adapter protein SFN and by stimulating Akt/mTOR pathway. Involved in tissue repair. May be a marker of basal cell differentiation in complex epithelia and therefore indicative of a certain type of epithelial 'stem cells'. Acts as a promoter of epithelial proliferation by acting a regulator of immune response in skin: promotes Th1/Th17-dominated immune environment contributing to the development of basaloid skin tumors. May act as an autoantigen in the immunopathogenesis of psoriasis, with certain peptide regions being a major target for autoreactive T-cells and hence causing their proliferation. The chain is Keratin, type I cytoskeletal 17 (Krt17) from Mus musculus (Mouse).